The primary structure comprises 109 residues: Mannose-specific lectin (109 aa).

The 85-residue stretch at 25-109 (MQEDCNLVLY…ARWATGTNIH (85 aa)) folds into the Bulb-type lectin domain. Alpha-D-mannopyranose is bound by residues Gln26, Asp28, Asn30, Tyr34, Asp37, Lys38, Trp41, Ala42, Asn44, Gln57, Asp59, Asn61, Tyr65, Ile72, Trp73, Asn76, Asn83, Gln89, Asp91, Asn93, Tyr97, and Trp102. Cys29 and Cys52 are joined by a disulfide.

As to quaternary structure, homotetramer; antiparallel. Detected in bulbs (at protein level).

The protein resides in the secreted. Its activity is regulated as follows. Strongly inhibited by alpha-1,6-linked mannotriose. Inhibited by various oligosaccharides of P.pastoris mannan including, Man(alpha-l,6)Man-alpha-O-Me, Man(alpha-l,2)Man, Man(alpha-l,3)Man-alpha-O-Me, Man(alpha-l,2)Man, alpha-1,2-linked mannotriose, and Man(alpha-1,6)Glc, in order of decreasing potency. Weakly inhibited by elsinotetraose. Not inhibited by maltose or nigerose. D-mannose-binding lectin which binds alpha-D-linked mannose. Displays a high affinity for alpha-(1-6)-mannose oligomers. Able to interact with both terminal and internal alpha-D-mannosyl residues. Displays antiviral activity and therefore may contribute to defense against infections. This chain is Mannose-specific lectin, found in Narcissus pseudonarcissus (Daffodil).